The primary structure comprises 307 residues: Ras-related protein Rab-33 (307 aa).

The tract at residues 19-80 is disordered; the sequence is VIDPPKHVTA…IPPAPEAVTA (62 aa). Pro residues-rich tracts occupy residues 42 to 56 and 65 to 75; these read PTHP…PAVP and PTAPPPIPPAP. 107–114 provides a ligand contact to GTP; it reads GNAAVGKT. An Effector region motif is present at residues 129–137; the sequence is TEATIGVDF. Residues 155–159 and 217–220 each bind GTP; these read DTAGQ and NKCD. Residues Cys306 and Cys307 are each lipidated (S-geranylgeranyl cysteine).

The protein belongs to the small GTPase superfamily. Rab family.

It is found in the cell membrane. This chain is Ras-related protein Rab-33 (rab-33), found in Caenorhabditis elegans.